The sequence spans 253 residues: HTH-type transcriptional repressor DasR (253 aa).

Residues 16–86 (RAQRVPKYYR…QGKGTFVAKP (71 aa)) form the HTH gntR-type domain. A DNA-binding region (H-T-H motif) is located at residues 46–65 (ERTLAAEFDTSRTTVPQALQ).

Its subcellular location is the cytoplasm. In terms of biological role, global regulator that is part of the nutrient-sensing system. In the absence of glucosamine 6-P (GlcN6P), represses the phosphotransferase system (PTS) specific for the uptake of N-acetylglucosamine (PTSNag), and genes involved in the metabolism of chitin, as well as several genes involved in development, thereby linking carbon availability to morphogenesis. Regulates the dasABC transport operon involved in glucose-related morphogenesis. Essential for development. The sequence is that of HTH-type transcriptional repressor DasR (dasR) from Streptomyces griseus.